A 289-amino-acid chain; its full sequence is Formamidopyrimidine-DNA glycosylase 1 (289 aa).

The Schiff-base intermediate with DNA role is filled by proline 2. Catalysis depends on glutamate 3, which acts as the Proton donor. The active-site Proton donor; for beta-elimination activity is the lysine 61. Positions 100, 119, and 165 each coordinate DNA. The segment at aspartate 251–proline 285 adopts an FPG-type zinc-finger fold. Residue arginine 275 is the Proton donor; for delta-elimination activity of the active site.

It belongs to the FPG family. Monomer. Zn(2+) is required as a cofactor.

The catalysed reaction is Hydrolysis of DNA containing ring-opened 7-methylguanine residues, releasing 2,6-diamino-4-hydroxy-5-(N-methyl)formamidopyrimidine.. It catalyses the reaction 2'-deoxyribonucleotide-(2'-deoxyribose 5'-phosphate)-2'-deoxyribonucleotide-DNA = a 3'-end 2'-deoxyribonucleotide-(2,3-dehydro-2,3-deoxyribose 5'-phosphate)-DNA + a 5'-end 5'-phospho-2'-deoxyribonucleoside-DNA + H(+). Involved in base excision repair of DNA damaged by oxidation or by mutagenic agents. Acts as a DNA glycosylase that recognizes and removes damaged bases. Has a preference for oxidized purines, such as 7,8-dihydro-8-oxoguanine (8-oxoG) when paired with C, G or T, as well as methyl-faPy (formanidopyrimidine residues) in poly(dG-dC) and spiroiminodihydantoin:C base pairs. Unlike its E.coli ortholog has no activity on 8-oxoG:A. Has AP (apurinic/apyrimidinic) lyase activity and introduces nicks in the DNA strand. Cleaves the DNA backbone by beta-delta elimination to generate a single-strand break at the site of the removed base with both 3'- and 5'-phosphates. Cleaves ssDNA containing an AP site. Complements the H(2)O(2) sensitivity of an M.smegmatis fpg disruption mutant; upon expression in M.smegmatis excises 8-oxoG from dsDNA. The polypeptide is Formamidopyrimidine-DNA glycosylase 1 (fpg1) (Mycobacterium tuberculosis (strain ATCC 25618 / H37Rv)).